A 213-amino-acid polypeptide reads, in one-letter code: 3-isopropylmalate dehydratase small subunit (213 aa).

It belongs to the LeuD family. LeuD type 1 subfamily. As to quaternary structure, heterodimer of LeuC and LeuD.

The catalysed reaction is (2R,3S)-3-isopropylmalate = (2S)-2-isopropylmalate. It functions in the pathway amino-acid biosynthesis; L-leucine biosynthesis; L-leucine from 3-methyl-2-oxobutanoate: step 2/4. In terms of biological role, catalyzes the isomerization between 2-isopropylmalate and 3-isopropylmalate, via the formation of 2-isopropylmaleate. This is 3-isopropylmalate dehydratase small subunit from Neisseria meningitidis serogroup C (strain 053442).